Here is a 61-residue protein sequence, read N- to C-terminus: MPNILSLTCICFNSVIYPTSFFFAKLPEAYAIFNPIVDFMPVIPVLFFLLAFVWQAAVSFR.

A propeptide spanning residues 1–24 is cleaved from the precursor; sequence MPNILSLTCICFNSVIYPTSFFFA. Residues 32 to 52 form a helical membrane-spanning segment; it reads IFNPIVDFMPVIPVLFFLLAF.

It belongs to the PsbK family. PSII is composed of 1 copy each of membrane proteins PsbA, PsbB, PsbC, PsbD, PsbE, PsbF, PsbH, PsbI, PsbJ, PsbK, PsbL, PsbM, PsbT, PsbX, PsbY, PsbZ, Psb30/Ycf12, at least 3 peripheral proteins of the oxygen-evolving complex and a large number of cofactors. It forms dimeric complexes.

It is found in the plastid. The protein localises to the chloroplast thylakoid membrane. In terms of biological role, one of the components of the core complex of photosystem II (PSII). PSII is a light-driven water:plastoquinone oxidoreductase that uses light energy to abstract electrons from H(2)O, generating O(2) and a proton gradient subsequently used for ATP formation. It consists of a core antenna complex that captures photons, and an electron transfer chain that converts photonic excitation into a charge separation. The protein is Photosystem II reaction center protein K of Oryza nivara (Indian wild rice).